The chain runs to 502 residues: Maturase K (502 aa).

This sequence belongs to the intron maturase 2 family. MatK subfamily.

The protein localises to the plastid. The protein resides in the chloroplast. Usually encoded in the trnK tRNA gene intron. Probably assists in splicing its own and other chloroplast group II introns. The sequence is that of Maturase K from Brassica campestris (Field mustard).